The primary structure comprises 246 residues: Phosphomannomutase (246 aa).

Aspartate 13 (nucleophile) is an active-site residue. 2 residues coordinate Mg(2+): aspartate 13 and aspartate 15. The active-site Proton donor/acceptor is aspartate 15. Alpha-D-mannose 1-phosphate is bound by residues arginine 22, arginine 124, arginine 135, arginine 142, serine 180, and aspartate 182. Aspartate 208, tyrosine 220, and threonine 225 together coordinate Mg(2+).

This sequence belongs to the eukaryotic PMM family. As to quaternary structure, homodimer. It depends on Mg(2+) as a cofactor. In terms of tissue distribution, expressed in roots, stems, leaves, flowers and immature fruits.

Its subcellular location is the cytoplasm. It carries out the reaction alpha-D-mannose 1-phosphate = D-mannose 6-phosphate. The protein operates within nucleotide-sugar biosynthesis; GDP-alpha-D-mannose biosynthesis; alpha-D-mannose 1-phosphate from D-fructose 6-phosphate: step 2/2. In terms of biological role, catalyzes the interconversion of mannose-6-phosphate to mannose-1-phosphate, the precursor for the synthesis of GDP-mannose. GDP-mannose is an essential sugar nucleotide for the synthesis of D-mannose-containing cell wall polysaccharides (galactomannans and glucomannans), glycolipids, glycoproteins and the antioxidant L-ascorbate. Can complement the yeast temperature-sensitive mutant sec53-6. This Arabidopsis thaliana (Mouse-ear cress) protein is Phosphomannomutase.